Here is a 552-residue protein sequence, read N- to C-terminus: Dihydroxy-acid dehydratase (552 aa).

Cysteine 46 serves as a coordination point for [2Fe-2S] cluster. Aspartate 78 provides a ligand contact to Mg(2+). Position 119 (cysteine 119) interacts with [2Fe-2S] cluster. Mg(2+)-binding residues include aspartate 120 and lysine 121. Residue lysine 121 is modified to N6-carboxylysine. Cysteine 191 is a binding site for [2Fe-2S] cluster. Mg(2+) is bound at residue glutamate 442. The active-site Proton acceptor is the serine 468.

It belongs to the IlvD/Edd family. Homodimer. [2Fe-2S] cluster is required as a cofactor. Mg(2+) serves as cofactor.

The enzyme catalyses (2R)-2,3-dihydroxy-3-methylbutanoate = 3-methyl-2-oxobutanoate + H2O. The catalysed reaction is (2R,3R)-2,3-dihydroxy-3-methylpentanoate = (S)-3-methyl-2-oxopentanoate + H2O. The protein operates within amino-acid biosynthesis; L-isoleucine biosynthesis; L-isoleucine from 2-oxobutanoate: step 3/4. Its pathway is amino-acid biosynthesis; L-valine biosynthesis; L-valine from pyruvate: step 3/4. Functions in the biosynthesis of branched-chain amino acids. Catalyzes the dehydration of (2R,3R)-2,3-dihydroxy-3-methylpentanoate (2,3-dihydroxy-3-methylvalerate) into 2-oxo-3-methylpentanoate (2-oxo-3-methylvalerate) and of (2R)-2,3-dihydroxy-3-methylbutanoate (2,3-dihydroxyisovalerate) into 2-oxo-3-methylbutanoate (2-oxoisovalerate), the penultimate precursor to L-isoleucine and L-valine, respectively. The polypeptide is Dihydroxy-acid dehydratase (Picrophilus torridus (strain ATCC 700027 / DSM 9790 / JCM 10055 / NBRC 100828 / KAW 2/3)).